The sequence spans 523 residues: ADP-ribosylation factor GTPase-activating protein 3 (523 aa).

Residues 10–126 (LAIFKRLRSV…IKTLATQATR (117 aa)) form the Arf-GAP domain. The C4-type zinc-finger motif lies at 25–48 (CFDCGAKNPSWASISYGVFLCIDC). A disordered region spans residues 162–206 (GAMQASAQPESASSTPWGLETTPEKHEGGPGQGPSVEGLNTPGKA). The segment covering 164-177 (MQASAQPESASSTP) has biased composition (polar residues). Phosphoserine occurs at positions 231 and 241. The disordered stretch occupies residues 248-269 (QAQAVDKRKEQEDLARGAPKEE). Phosphoserine is present on residues S270, S274, and S331. Residues 308–424 (GFGSCRSGIS…YEPIGSTDEA (117 aa)) are disordered. The span at 314–332 (SGISHSVTSDMQTIEQESP) shows a compositional bias: polar residues. A compositionally biased stretch (low complexity) spans 348-361 (SYFSSSSKWSEQSS). S377 is modified (phosphoserine). The segment covering 385-396 (YWKKDSSRDPEP) has biased composition (basic and acidic residues). A phosphoserine mark is found at S435, S458, S460, S462, S464, and S465.

It localises to the cytoplasm. The protein resides in the golgi apparatus membrane. With respect to regulation, GAP activity stimulated by phosphatidylinositol 4,5-bisphosphate (PIP2). Its function is as follows. GTPase-activating protein (GAP) for ADP ribosylation factor 1 (ARF1). Hydrolysis of ARF1-bound GTP may lead to dissociation of coatomer from Golgi-derived membranes to allow fusion with target membranes. The sequence is that of ADP-ribosylation factor GTPase-activating protein 3 (Arfgap3) from Mus musculus (Mouse).